The following is a 238-amino-acid chain: Glutamine amidotransferase-like protein chyE (238 aa).

One can recognise a Glutamine amidotransferase type-1 domain in the interval 8-238 (KIAVLINTPP…LERVLQWLSE (231 aa)). Cys-102 acts as the Nucleophile in catalysis. Active-site residues include His-189 and Glu-191.

The protein belongs to the peptidase C26 family.

The protein operates within pigment biosynthesis. In terms of biological role, glutamine amidotransferase-like protein; part of the gene cluster that mediates the biosynthesis of the yellow pigment chrysogine. the NRPS chyA mediates the condensation of anthranilic acid and alanine into the intermediate 2-(2-aminopropanamido)benzoic acid. The remainder of the pathway is highly branched yielding at least 13 chrysogine-related compounds. The malonyl transferase chyE converts 2-(2-aminopropanamido)benzoic acid and 2-(2-aminopropanamido)benzamidine into 2-(2-(2-carboxyacetamido)propanamido)benzoic acid and 3-((1-((2-carbamoylphenyl)amino)-1-oxopropan-2-yl)amino)-3-oxopropanoic acid, respectively. ChyD is an amidase, being responsible for the amidation of the carboxylic acid moiety of 2-(2-aminopropanamido)benzoic acid, 2-(2-(2-carboxyacetamido)propanamido)benzoic acid and 2-(2-((4-amino-1-carboxy-4-oxobutyl)amino)propanamido)benzoic acid. ChyC is involved in the same reactions as ChyD, but plays a more minor role in the amidation reactions compared to chyD. The oxidoreductases chyH and chyM are involved in oxidation reactions that form N-pyruvoylanthranilamide from 2-(2-aminopropanamido)benzamidine and (1-((2-carbamoylphenyl)amino)-1-oxopropan-2-yl)glutamine, respectively. N-pyruvoylanthranilamide is further converted via two further branches in the pathway, yielding chrysogine and additional chrysogine-related coumpounds. Chrysogine is likely formed by a spontaneous ring closure from N-pyruvoylanthranilamide. The polypeptide is Glutamine amidotransferase-like protein chyE (Penicillium rubens (strain ATCC 28089 / DSM 1075 / NRRL 1951 / Wisconsin 54-1255) (Penicillium chrysogenum)).